The chain runs to 312 residues: MKWSEISIHTTHEAVEAISNILHEAGAGGVVIEDPFELTKERETTYGEIYQLNPDDYPEEGVIIKAYLPVNSFLGETVEEIKQAINNLMLYNIDIGRNKITISEVNEEEWATAWKKYYNPVKISERFTIVPTWETYEPVSSDELIIELDPGMAFGTGTHPTTVMCIQALEKTVKKGDTVVDVGTGSGILSIAAAMLGAKRVHALDLDPVAVESAKLNVKLNKVHDVVTVSQNNLLDRMDEQADVIVANILAEIILRFVDDAYRLLRSDGVFITSGIIQTKKQEVKEGLLRAGFTIEETLTMEDWVAFIAKKQ.

Residues threonine 162, glycine 183, aspartate 205, and asparagine 248 each coordinate S-adenosyl-L-methionine.

The protein belongs to the methyltransferase superfamily. PrmA family.

The protein localises to the cytoplasm. It carries out the reaction L-lysyl-[protein] + 3 S-adenosyl-L-methionine = N(6),N(6),N(6)-trimethyl-L-lysyl-[protein] + 3 S-adenosyl-L-homocysteine + 3 H(+). Its function is as follows. Methylates ribosomal protein L11. The protein is Ribosomal protein L11 methyltransferase of Anoxybacillus flavithermus (strain DSM 21510 / WK1).